The sequence spans 125 residues: Small ribosomal subunit protein uS13 (125 aa).

A disordered region spans residues 99 to 125 (RGQRTKTNARTRKGKRKTVANKKMAAK).

It belongs to the universal ribosomal protein uS13 family. In terms of assembly, part of the 30S ribosomal subunit. Forms a loose heterodimer with protein S19. Forms two bridges to the 50S subunit in the 70S ribosome.

In terms of biological role, located at the top of the head of the 30S subunit, it contacts several helices of the 16S rRNA. In the 70S ribosome it contacts the 23S rRNA (bridge B1a) and protein L5 of the 50S subunit (bridge B1b), connecting the 2 subunits; these bridges are implicated in subunit movement. Contacts the tRNAs in the A and P-sites. The chain is Small ribosomal subunit protein uS13 from Borrelia turicatae (strain 91E135).